Reading from the N-terminus, the 250-residue chain is MANSTGKPTSSTQEDEEATSATEILAQLMQDIIDREEDIDDEDDIDDEVIDDEDYEVASLPLLQESQANQKQSREREEETEKNQPKRFKKQNMMKINIHDFSEETLRLIEVWYEAELDPQDIFGDNEVTRLFSRPIKKQLMSSDVDKDQCMLMLSKEQVKEKMLPFLEDSENPVKGIDVSVYGPDGKVQQMEFKMWNGDKTPVLTSGWKQFVEDYGLSMTCDFVTVWMFRHIKTRKLCFAIHYVKFSLRD.

Positions 1-12 (MANSTGKPTSST) are enriched in polar residues. Positions 1–90 (MANSTGKPTS…EKNQPKRFKK (90 aa)) are disordered. A compositionally biased stretch (acidic residues) spans 34–56 (DREEDIDDEDDIDDEVIDDEDYE). Basic and acidic residues predominate over residues 72 to 84 (QSREREEETEKNQ). A DNA-binding region (TF-B3) is located at residues 137–245 (KKQLMSSDVD…KLCFAIHYVK (109 aa)).

The protein localises to the nucleus. In Arabidopsis thaliana (Mouse-ear cress), this protein is Putative B3 domain-containing protein At4g03170.